Reading from the N-terminus, the 507-residue chain is MFVQLLTYGLVAASTLQGVFASTKLPILDLPYGRWRAAKYDEAADDGSYGPPCIPGPDAPGFEDPSYKRQQKAAREDCLFLDAYVPGNALRNRGHRKLPVIVWVYGGGYSLGSKDLAIEEGIYDGNSLVQRAAGNAIVITFNYRLSALGWLAGTTMENEGLPNAGLHDQRAVFEWVRDYVHLLGGDRDKVSAWGESAGGGSILSHITANQGIVDPLFKRAVVMSPGLDFPIDRKGSVENQFKAFASRAGCAGQGLACLRAANISQLIEASYKDLGQIGPTPDGRVLKHVFSVDIAQGNYWRHLDSLIISHVYDEGGPFVGNDSTLESLSGFLKSNFPTYATEAVSTLEDYYHLKAPSNESVRAIGSRLIRDAIFTCNIRDILRKYSKKSYLMQYSPKEATHGQDVFALWYSPKLWNVSIPLFSGYQSYFLSHAITGDPNTLRDRDISPPTIAWPKVGDINAEKLENTLDVVDTGYKLISDNQVLKSTCDLWQKLLLDVTKQGGYLDI.

Residues 1–21 (MFVQLLTYGLVAASTLQGVFA) form the signal peptide. S196 acts as the Acyl-ester intermediate in catalysis. N-linked (GlcNAc...) asparagine glycans are attached at residues N262, N321, N358, and N416.

This sequence belongs to the type-B carboxylesterase/lipase family.

The protein resides in the secreted. It carries out the reaction a triacylglycerol + H2O = a diacylglycerol + a fatty acid + H(+). In Arthroderma benhamiae (strain ATCC MYA-4681 / CBS 112371) (Trichophyton mentagrophytes), this protein is Secreted lipase ARB_01498.